We begin with the raw amino-acid sequence, 445 residues long: Cytochrome b (445 aa).

Residues 2–49 (SGIPHDHYEPRTGIEKWLHSRLPIVALAYDTIMIPTPRNLNWMWIWGV) lie on the Cytoplasmic side of the membrane. A helical membrane pass occupies residues 50 to 67 (VLAFCLVLQIVTGIVLAM). Residues 68 to 94 (HYTPHVDLAFASVEHIMRNVNGGFMLR) lie on the Periplasmic side of the membrane. The helical transmembrane segment at 95–113 (YLHANGASLFFIAVYLHIF) threads the bilayer. H97 and H111 together coordinate heme b. The Cytoplasmic segment spans residues 114-129 (RGLYYGSYKAPREVTW). The chain crosses the membrane as a helical span at residues 130 to 149 (IVGMLIYLAMMATAFMGYVL). Over 150 to 193 (PWGQMSFWGATVITGLFGAIPGIGHSIQTWLLGGPAVDNATLNR) the chain is Periplasmic. A helical transmembrane segment spans residues 194–216 (FFSLHYLLPFVIAALVAIHIWAF). Residues H198 and H212 each contribute to the heme b site. Residues 217–252 (HSTGNNNPTGVEVRRTSKAEAQKDTVPFWPYFIIKD) are Cytoplasmic-facing. A helical transmembrane segment spans residues 253 to 270 (VFALAVVLLVFFAIVGFM). Residues 271–329 (PNYLGHPDNYIEANPLSTPAHIVPEWYFLPFYAILRAFTADVWVVQIANFISFGIIDAK) lie on the Periplasmic side of the membrane. The chain crosses the membrane as a helical span at residues 330–346 (FFGVLAMFGAILVMALV). Residues 347 to 364 (PWLDTSPVRSGRYRPMFK) are Cytoplasmic-facing. A helical transmembrane segment spans residues 365 to 382 (IYFWLLAADFVILTWVGA). The Periplasmic portion of the chain corresponds to 383-388 (QQTTFP). The chain crosses the membrane as a helical span at residues 389–408 (YDWISLIASAYWFAYFLVIL). Residues 409–445 (PILGAIEKPVAPPATIEEDFNAHYSPATGGTKTVVAE) lie on the Cytoplasmic side of the membrane.

It belongs to the cytochrome b family. The main subunits of complex b-c1 are: cytochrome b, cytochrome c1 and the Rieske protein. Heme b is required as a cofactor.

It localises to the cell membrane. Component of the ubiquinol-cytochrome c reductase complex (complex III or cytochrome b-c1 complex), which is a respiratory chain that generates an electrochemical potential coupled to ATP synthesis. This chain is Cytochrome b (petB), found in Cereibacter sphaeroides (Rhodobacter sphaeroides).